A 454-amino-acid chain; its full sequence is Metacaspase-1A (454 aa).

Over residues Met1–His16 the composition is skewed to gly residues. The tract at residues Met1 to His129 is disordered. 4 stretches are compositionally biased toward low complexity: residues Tyr38–Asn47, Tyr59–Gln80, Gly88–Arg101, and Gly109–Gly120. Catalysis depends on residues His244 and Cys300.

It belongs to the peptidase C14B family.

Functionally, involved in cell death (apoptosis). The sequence is that of Metacaspase-1A (casA) from Neurospora crassa (strain ATCC 24698 / 74-OR23-1A / CBS 708.71 / DSM 1257 / FGSC 987).